The following is a 292-amino-acid chain: Protease HtpX homolog (292 aa).

2 consecutive transmembrane segments (helical) span residues Ile-4–Leu-24 and Ala-42–Ser-62. His-147 provides a ligand contact to Zn(2+). Glu-148 is an active-site residue. Residue His-151 coordinates Zn(2+). The next 2 membrane-spanning stretches (helical) occupy residues Val-158 to Ile-178 and Phe-198 to Trp-218. Glu-224 contributes to the Zn(2+) binding site.

This sequence belongs to the peptidase M48B family. It depends on Zn(2+) as a cofactor.

It is found in the cell inner membrane. The protein is Protease HtpX homolog of Nitrosomonas eutropha (strain DSM 101675 / C91 / Nm57).